Consider the following 429-residue polypeptide: Enolase (429 aa).

Gln-166 is a binding site for (2R)-2-phosphoglycerate. Glu-208 acts as the Proton donor in catalysis. Positions 245, 289, and 316 each coordinate Mg(2+). Lys-341, Arg-370, Ser-371, and Lys-392 together coordinate (2R)-2-phosphoglycerate. The Proton acceptor role is filled by Lys-341.

It belongs to the enolase family. Component of the RNA degradosome, a multiprotein complex involved in RNA processing and mRNA degradation. Requires Mg(2+) as cofactor.

The protein resides in the cytoplasm. The protein localises to the secreted. It is found in the cell surface. It catalyses the reaction (2R)-2-phosphoglycerate = phosphoenolpyruvate + H2O. It functions in the pathway carbohydrate degradation; glycolysis; pyruvate from D-glyceraldehyde 3-phosphate: step 4/5. Its function is as follows. Catalyzes the reversible conversion of 2-phosphoglycerate (2-PG) into phosphoenolpyruvate (PEP). It is essential for the degradation of carbohydrates via glycolysis. This is Enolase from Acinetobacter baumannii (strain AB307-0294).